The following is a 338-amino-acid chain: Biotin synthase (338 aa).

The Radical SAM core domain occupies 45 to 272; it reads DEVQMSTLLS…QSVVRLSAGR (228 aa). [4Fe-4S] cluster contacts are provided by Cys-60, Cys-64, and Cys-67. Cys-104, Cys-135, Cys-195, and Arg-267 together coordinate [2Fe-2S] cluster.

Belongs to the radical SAM superfamily. Biotin synthase family. As to quaternary structure, homodimer. The cofactor is [4Fe-4S] cluster. [2Fe-2S] cluster is required as a cofactor.

It catalyses the reaction (4R,5S)-dethiobiotin + (sulfur carrier)-SH + 2 reduced [2Fe-2S]-[ferredoxin] + 2 S-adenosyl-L-methionine = (sulfur carrier)-H + biotin + 2 5'-deoxyadenosine + 2 L-methionine + 2 oxidized [2Fe-2S]-[ferredoxin]. It functions in the pathway cofactor biosynthesis; biotin biosynthesis; biotin from 7,8-diaminononanoate: step 2/2. Functionally, catalyzes the conversion of dethiobiotin (DTB) to biotin by the insertion of a sulfur atom into dethiobiotin via a radical-based mechanism. This is Biotin synthase from Parvibaculum lavamentivorans (strain DS-1 / DSM 13023 / NCIMB 13966).